The following is a 405-amino-acid chain: 1-deoxy-D-xylulose 5-phosphate reductoisomerase (405 aa).

NADPH-binding residues include T16, G17, S18, I19, G42, R43, N44, and N130. K131 contacts 1-deoxy-D-xylulose 5-phosphate. Position 132 (E132) interacts with NADPH. D156 provides a ligand contact to Mn(2+). 1-deoxy-D-xylulose 5-phosphate contacts are provided by S157, E158, S192, and H215. E158 is a binding site for Mn(2+). NADPH is bound at residue G221. Residues S228, N233, K234, and E237 each coordinate 1-deoxy-D-xylulose 5-phosphate. Residue E237 participates in Mn(2+) binding.

The protein belongs to the DXR family. Requires Mg(2+) as cofactor. Mn(2+) is required as a cofactor.

It catalyses the reaction 2-C-methyl-D-erythritol 4-phosphate + NADP(+) = 1-deoxy-D-xylulose 5-phosphate + NADPH + H(+). Its pathway is isoprenoid biosynthesis; isopentenyl diphosphate biosynthesis via DXP pathway; isopentenyl diphosphate from 1-deoxy-D-xylulose 5-phosphate: step 1/6. Functionally, catalyzes the NADPH-dependent rearrangement and reduction of 1-deoxy-D-xylulose-5-phosphate (DXP) to 2-C-methyl-D-erythritol 4-phosphate (MEP). In Pasteurella multocida (strain Pm70), this protein is 1-deoxy-D-xylulose 5-phosphate reductoisomerase.